We begin with the raw amino-acid sequence, 473 residues long: Photosystem II CP43 reaction center protein (473 aa).

Positions 1-14 are excised as a propeptide; sequence MKTLYSLRRFYPVE. T15 carries the post-translational modification N-acetylthreonine. Phosphothreonine is present on T15. Transmembrane regions (helical) follow at residues 69-93, 134-155, 178-200, 255-275, and 291-312; these read LFEVAHFVPEKPMYEQGLILLPHLA, LLGPETLEESFPFFGYVWKDRN, KALYFGGVYDTWAPGGGDVRKIT, KPFAWARRAFVWSGEAYLSYS, and WFNNTAYPSEFYGPTGPEASQA. Residue E367 coordinates [CaMn4O5] cluster. A helical membrane pass occupies residues 447–471; sequence RARAAAAGFEKGIDRDFEPVLSMTP.

Belongs to the PsbB/PsbC family. PsbC subfamily. PSII is composed of 1 copy each of membrane proteins PsbA, PsbB, PsbC, PsbD, PsbE, PsbF, PsbH, PsbI, PsbJ, PsbK, PsbL, PsbM, PsbT, PsbX, PsbY, PsbZ, Psb30/Ycf12, at least 3 peripheral proteins of the oxygen-evolving complex and a large number of cofactors. It forms dimeric complexes. Requires Binds multiple chlorophylls and provides some of the ligands for the Ca-4Mn-5O cluster of the oxygen-evolving complex. It may also provide a ligand for a Cl- that is required for oxygen evolution. PSII binds additional chlorophylls, carotenoids and specific lipids. as cofactor.

Its subcellular location is the plastid. The protein resides in the chloroplast thylakoid membrane. Its function is as follows. One of the components of the core complex of photosystem II (PSII). It binds chlorophyll and helps catalyze the primary light-induced photochemical processes of PSII. PSII is a light-driven water:plastoquinone oxidoreductase, using light energy to abstract electrons from H(2)O, generating O(2) and a proton gradient subsequently used for ATP formation. The protein is Photosystem II CP43 reaction center protein of Liriodendron tulipifera (Tuliptree).